The sequence spans 51 residues: MAGNKPLGKKLRLAKALKQNRRVPMFAIARTKGSVKQHPKMRHWRRNTLKK.

The tract at residues 32–51 (KGSVKQHPKMRHWRRNTLKK) is disordered. The segment covering 33 to 51 (GSVKQHPKMRHWRRNTLKK) has biased composition (basic residues).

It belongs to the eukaryotic ribosomal protein eL39 family.

The polypeptide is Large ribosomal subunit protein eL39 (Methanococcus vannielii (strain ATCC 35089 / DSM 1224 / JCM 13029 / OCM 148 / SB)).